Consider the following 156-residue polypeptide: Transcriptional repressor NrdR (156 aa).

Residues 3–34 (CPFCGSMDTRVLDSRPTLDGAAIRRRRECISC) fold into a zinc finger. The ATP-cone domain maps to 49 to 139 (VLVIKKDGRR…VYRDFREVDQ (91 aa)).

This sequence belongs to the NrdR family. Zn(2+) is required as a cofactor.

Negatively regulates transcription of bacterial ribonucleotide reductase nrd genes and operons by binding to NrdR-boxes. In Thermotoga neapolitana (strain ATCC 49049 / DSM 4359 / NBRC 107923 / NS-E), this protein is Transcriptional repressor NrdR.